We begin with the raw amino-acid sequence, 353 residues long: Probable dual-specificity RNA methyltransferase RlmN (353 aa).

Glu-104 serves as the catalytic Proton acceptor. The region spanning 112 to 341 (DGGRKTICIS…ILNRRSPGKD (230 aa)) is the Radical SAM core domain. Cys-119 and Cys-346 are oxidised to a cystine. Cys-126, Cys-130, and Cys-133 together coordinate [4Fe-4S] cluster. S-adenosyl-L-methionine-binding positions include 173–174 (GE), Ser-205, 228–230 (SLN), and Asn-304. Catalysis depends on Cys-346, which acts as the S-methylcysteine intermediate.

The protein belongs to the radical SAM superfamily. RlmN family. Requires [4Fe-4S] cluster as cofactor.

Its subcellular location is the cytoplasm. It catalyses the reaction adenosine(2503) in 23S rRNA + 2 reduced [2Fe-2S]-[ferredoxin] + 2 S-adenosyl-L-methionine = 2-methyladenosine(2503) in 23S rRNA + 5'-deoxyadenosine + L-methionine + 2 oxidized [2Fe-2S]-[ferredoxin] + S-adenosyl-L-homocysteine. The catalysed reaction is adenosine(37) in tRNA + 2 reduced [2Fe-2S]-[ferredoxin] + 2 S-adenosyl-L-methionine = 2-methyladenosine(37) in tRNA + 5'-deoxyadenosine + L-methionine + 2 oxidized [2Fe-2S]-[ferredoxin] + S-adenosyl-L-homocysteine. Specifically methylates position 2 of adenine 2503 in 23S rRNA and position 2 of adenine 37 in tRNAs. This is Probable dual-specificity RNA methyltransferase RlmN from Leptospira interrogans serogroup Icterohaemorrhagiae serovar copenhageni (strain Fiocruz L1-130).